We begin with the raw amino-acid sequence, 168 residues long: Myosin regulatory light chain 11 (168 aa).

Alanine 2 carries the post-translational modification N,N,N-trimethylalanine. The residue at position 15 (serine 15) is a Phosphoserine. EF-hand domains lie at 24–59, 94–129, and 130–165; these read TQIQ…MGRL, DPED…QCDR, and FTPE…GEDK. Aspartate 37, asparagine 39, aspartate 41, and aspartate 48 together coordinate Ca(2+).

Myosin is a hexamer of 2 heavy chains and 4 light chains. In terms of processing, the N-terminus is blocked. N,N,N-trimethylalanine, found in other myosin light chains would not have been detected in the N-terminal tryptic peptide in PubMed:7358336 because it would remain trimethylated and ninhydrin negative after hydrolysis.

Its function is as follows. Myosin regulatory subunit that plays an essential to maintain muscle integrity during early development. Plays a role in muscle contraction. The chain is Myosin regulatory light chain 11 (MYL11) from Gallus gallus (Chicken).